Reading from the N-terminus, the 304-residue chain is Coenzyme PQQ synthesis protein B (304 aa).

It belongs to the PqqB family.

It functions in the pathway cofactor biosynthesis; pyrroloquinoline quinone biosynthesis. May be involved in the transport of PQQ or its precursor to the periplasm. The chain is Coenzyme PQQ synthesis protein B from Pseudomonas paraeruginosa (strain DSM 24068 / PA7) (Pseudomonas aeruginosa (strain PA7)).